We begin with the raw amino-acid sequence, 247 residues long: tRNA pseudouridine synthase A (247 aa).

The active-site Nucleophile is aspartate 52. Tyrosine 111 is a substrate binding site.

This sequence belongs to the tRNA pseudouridine synthase TruA family. Homodimer.

It catalyses the reaction uridine(38/39/40) in tRNA = pseudouridine(38/39/40) in tRNA. Functionally, formation of pseudouridine at positions 38, 39 and 40 in the anticodon stem and loop of transfer RNAs. The protein is tRNA pseudouridine synthase A of Caulobacter vibrioides (strain ATCC 19089 / CIP 103742 / CB 15) (Caulobacter crescentus).